The primary structure comprises 679 residues: DNA ligase (679 aa).

NAD(+) is bound by residues 36–40 (DEYYD) and 94–95 (SL). K126 serves as the catalytic N6-AMP-lysine intermediate. NAD(+) contacts are provided by R147, E181, K299, and K323. 4 residues coordinate Zn(2+): C415, C418, C433, and C438. The region spanning 603–679 (IQSTKLENKT…DEEFLKKMLE (77 aa)) is the BRCT domain.

This sequence belongs to the NAD-dependent DNA ligase family. LigA subfamily. Mg(2+) is required as a cofactor. The cofactor is Mn(2+).

It catalyses the reaction NAD(+) + (deoxyribonucleotide)n-3'-hydroxyl + 5'-phospho-(deoxyribonucleotide)m = (deoxyribonucleotide)n+m + AMP + beta-nicotinamide D-nucleotide.. Its function is as follows. DNA ligase that catalyzes the formation of phosphodiester linkages between 5'-phosphoryl and 3'-hydroxyl groups in double-stranded DNA using NAD as a coenzyme and as the energy source for the reaction. It is essential for DNA replication and repair of damaged DNA. The protein is DNA ligase of Mycoplasmopsis pulmonis (strain UAB CTIP) (Mycoplasma pulmonis).